The primary structure comprises 327 residues: Tryptophan--tRNA ligase (327 aa).

ATP-binding positions include 9 to 11 and 17 to 18; these read QPS and GN. Residues 10–18 carry the 'HIGH' region motif; the sequence is PSGDIHIGN. Residue D132 coordinates L-tryptophan. ATP is bound by residues 144-146, I183, and 192-196; these read GED and KMSKS. The 'KMSKS' region motif lies at 192–196; it reads KMSKS.

This sequence belongs to the class-I aminoacyl-tRNA synthetase family. In terms of assembly, homodimer.

Its subcellular location is the cytoplasm. It catalyses the reaction tRNA(Trp) + L-tryptophan + ATP = L-tryptophyl-tRNA(Trp) + AMP + diphosphate + H(+). Its function is as follows. Catalyzes the attachment of tryptophan to tRNA(Trp). In Caldanaerobacter subterraneus subsp. tengcongensis (strain DSM 15242 / JCM 11007 / NBRC 100824 / MB4) (Thermoanaerobacter tengcongensis), this protein is Tryptophan--tRNA ligase.